Reading from the N-terminus, the 584-residue chain is Levansucrase (584 aa).

Residues 1 to 30 (MAHVRRKVATLNMALAGSLLMVLGAQSALA) form the signal peptide. Gln31 carries the pyrrolidone carboxylic acid modification. Positions 134, 135, 225, 308, and 309 each coordinate sucrose. Asp135 acts as the Nucleophile in catalysis. Residues Cys339 and Cys395 are joined by a disulfide bond. Glu401 (proton donor/acceptor) is an active-site residue.

Belongs to the glycosyl hydrolase 68 family. In terms of assembly, monomer. In terms of processing, the N-terminus is blocked. The N-terminal Gln is cyclized to a pyroglutamic acid.

It localises to the secreted. It carries out the reaction [6)-beta-D-fructofuranosyl-(2-&gt;](n) alpha-D-glucopyranoside + sucrose = [6)-beta-D-fructofuranosyl-(2-&gt;](n+1) alpha-D-glucopyranoside + D-glucose. With respect to regulation, strongly inhibited by Hg(2+) and slightly activated by Co(2+). Not inhibited by the metal ion chelator EDTA, suggesting that this enzyme does not need a metal cofactor. Functionally, catalyzes the synthesis of levan, a fructose polymer, by transferring the fructosyl moiety from sucrose to a growing acceptor molecule. Also displays sucrose hydrolase activity. In vitro, catalyzes transfructosylation from sucrose to a variety of acceptors including water (sucrose hydrolysis), glucose (exchange reaction), fructan (polymerase reaction) and sucrose (oligofructoside synthesis). Levansucrase of G.diazotrophicus SRT4, unlike the enzyme of B.subtilis, causes accumulation of large quantities of tri- and tetrasaccharides but small quantities of high-molecular-mass levan. It may act more as a sucrose hydrolase than as a fructan polymerase, and may be the key enzyme in the sucrose metabolism of G.diazotrophicus SRT4. In Gluconacetobacter diazotrophicus (Acetobacter diazotrophicus), this protein is Levansucrase.